A 537-amino-acid polypeptide reads, in one-letter code: uncharacterized protein (537 aa).

The protein belongs to the RuBisCO large chain family. Type IV subfamily.

Functionally, unknown. Probably does not have RuBisCO activity. This is an uncharacterized protein from Symbiodinium sp. (Dinoflagellate).